The chain runs to 111 residues: Transcription factor S (111 aa).

Cysteine 4, cysteine 7, cysteine 24, cysteine 27, cysteine 72, cysteine 75, cysteine 100, and cysteine 103 together coordinate Zn(2+). The segment at 4-27 (CPKCGSMMMPRKENGKTVYKCSKC) adopts a C4-type zinc-finger fold. The TFIIS-type zinc finger occupies 68–108 (RGISCPSCGNDEAYFWILQTRSADEPATRFYKCTKCGKVWR).

Belongs to the archaeal RpoM/eukaryotic RPA12/RPB9/RPC11 RNA polymerase family.

In terms of biological role, induces RNA cleavage activity in the RNA polymerase. In its presence, the cleavage activity of the RNA polymerase truncates the RNA back to position +15 in a stepwise manner by releasing mainly dinucleotides from the 3'-end of the nascent RNA. The truncated RNAs are able to continue elongation. Involved in transcriptional proofreading and fidelity. Misincorporation of nucleotides during elongation of transcription leads to arrested elongation complexes which are rescued by TFS-promoted removal of a dinucleotide from the 3'-end. TFS is able to induce a cleavage resynthesis cycle in stalled elongation complexes (resulting from the next missing nucleotide or a reduced incorporation rate of a wrong nucleotide) preventing misincorporation and enabling proofreading in a post-incorporation manner. Pausing of elongation complexes is the main determinant of TFS-induced RNA cleavage. This chain is Transcription factor S, found in Sulfolobus acidocaldarius (strain ATCC 33909 / DSM 639 / JCM 8929 / NBRC 15157 / NCIMB 11770).